Here is a 168-residue protein sequence, read N- to C-terminus: MVKDILAPGLRVVFCGINPGLSSANTGFPFAHPANRFWKVIHLAGFTDRQLKPEEAEKLLDFRCGVTKLVDRPTVQATEVKLHGLRSGGRNLIEKIEDYQPAALAVLGKQAFEQGFSQRGIAWGKQKIAIGATMVWVLPNPSGLNRIKTEKLVEAYRELDQALIMRGL.

Belongs to the uracil-DNA glycosylase (UDG) superfamily. TDG/mug family. Binds DNA as a monomer.

It localises to the cytoplasm. The catalysed reaction is Specifically hydrolyzes mismatched double-stranded DNA and polynucleotides, releasing free uracil.. Excises ethenocytosine and uracil, which can arise by alkylation or deamination of cytosine, respectively, from the corresponding mispairs with guanine in ds-DNA. It is capable of hydrolyzing the carbon-nitrogen bond between the sugar-phosphate backbone of the DNA and the mispaired base. The complementary strand guanine functions in substrate recognition. Required for DNA damage lesion repair in stationary-phase cells. This Salmonella choleraesuis (strain SC-B67) protein is G/U mismatch-specific DNA glycosylase.